The following is a 659-amino-acid chain: 3-hydroxypropionyl-coenzyme A synthetase (659 aa).

The active site involves D525. K616 carries the post-translational modification N6-acetyllysine.

Belongs to the ATP-dependent AMP-binding enzyme family.

It carries out the reaction 3-hydroxypropanoate + ATP + CoA = 3-hydroxypropanoyl-CoA + AMP + diphosphate. In terms of biological role, plays a role in the autotrophic CO(2) fixation pathway. Activates 3-hydroxypropionate to its CoA ester. Can also activate propionate, and to a lesser extent acrylate, acetate and butyrate. This is 3-hydroxypropionyl-coenzyme A synthetase from Sulfurisphaera tokodaii (strain DSM 16993 / JCM 10545 / NBRC 100140 / 7) (Sulfolobus tokodaii).